The following is a 306-amino-acid chain: Protoheme IX farnesyltransferase (306 aa).

8 consecutive transmembrane segments (helical) span residues 31 to 50, 55 to 77, 104 to 124, 125 to 145, 168 to 188, 218 to 235, 238 to 258, and 286 to 306; these read VIELLLVTTAPVMILAQGGW, LILGVLVGGTLSAGSANAFNCYI, LVFAWIIGVASIIWLGVISNW, LAAALSLAAILFYVFVYTLWL, WAAVTGDISWAPVILFMIVFL, GRAAVGLQTILYSWATLA, LLLIPVAGMGLVYTLAALAGG, and ASISYLSLLFLAVGIDPLLPF.

It belongs to the UbiA prenyltransferase family. Protoheme IX farnesyltransferase subfamily.

Its subcellular location is the cell membrane. It catalyses the reaction heme b + (2E,6E)-farnesyl diphosphate + H2O = Fe(II)-heme o + diphosphate. It functions in the pathway porphyrin-containing compound metabolism; heme O biosynthesis; heme O from protoheme: step 1/1. Its function is as follows. Converts heme B (protoheme IX) to heme O by substitution of the vinyl group on carbon 2 of heme B porphyrin ring with a hydroxyethyl farnesyl side group. The chain is Protoheme IX farnesyltransferase from Clavibacter sepedonicus (Clavibacter michiganensis subsp. sepedonicus).